We begin with the raw amino-acid sequence, 487 residues long: Serine/threonine-protein kinase 4 (487 aa).

At M1 the chain carries N-acetylmethionine. A Phosphothreonine modification is found at T3. The region spanning 30-281 (FDVLEKLGEG…ATQLLQHPFV (252 aa)) is the Protein kinase domain. ATP is bound by residues 36–44 (LGEGSYGSV) and K59. D149 acts as the Proton acceptor in catalysis. At T183 the chain carries Phosphothreonine; by autocatalysis. The residue at position 265 (S265) is a Phosphoserine. Residues 290 to 310 (LRDLINEAMDVKLKRQESQQR) are a coiled coil. Basic and acidic residues predominate over residues 303–312 (KRQESQQREV). The disordered stretch occupies residues 303–332 (KRQESQQREVDQDDEENSEEDEMDSGTMVR). The span at 313-326 (DQDDEENSEEDEMD) shows a compositional bias: acidic residues. S320 is modified (phosphoserine). 2 positions are modified to phosphothreonine: T340 and T367. Position 387 is a phosphothreonine; by PKB/AKT1 (T387). Residues S410 and S414 each carry the phosphoserine modification. The residue at position 433 (Y433) is a Phosphotyrosine. The 48-residue stretch at 433–480 (YEFLKSWTVEDLQKRLLALDPMMEQEIEEIRQKYQSKRQPILDAIEAK) folds into the SARAH domain.

The protein belongs to the protein kinase superfamily. STE Ser/Thr protein kinase family. STE20 subfamily. Homodimer; mediated via the coiled-coil region. Interacts with NORE1, which inhibits autoactivation. Interacts with and stabilizes SAV1. Interacts with RASSF1. Interacts with FOXO3. Interacts with RASSF2 (via SARAH domain). Interacts with AR, PKB/AKT1, TNNI3 and SIRT1. Interacts with DLG5 (via PDZ domain 3). Interacts with MARK3 and SCRIB in the presence of DLG5. Mg(2+) is required as a cofactor. Autophosphorylated on serine and threonine residues. Phosphorylation at Thr-387 by PKB/AKT1, leads to inhibition of its: kinase activity, nuclear translocation and autophosphorylation at Thr-183. It also diminishes its cleavage by caspases and its ability to phosphorylate FOXO3. In terms of processing, proteolytically cleaved by caspase-3 during apoptosis at Asp-326 and Asp-349 resulting in a 37 kDa or a 39 kDa subunit respectively. The 39 kDa subunit is further cleaved into the 37 kDa form. Proteolytic cleavage results in kinase activation and nuclear translocation of the truncated form (MST1/N). It is less likely that cleavage at Asp-349 is a prerequisite for activation as this site is not conserved in the murine ortholog.

It is found in the cytoplasm. Its subcellular location is the nucleus. It carries out the reaction L-seryl-[protein] + ATP = O-phospho-L-seryl-[protein] + ADP + H(+). It catalyses the reaction L-threonyl-[protein] + ATP = O-phospho-L-threonyl-[protein] + ADP + H(+). With respect to regulation, inhibited by the C-terminal non-catalytic region. Activated by caspase-cleavage. Full activation also requires homodimerization and autophosphorylation of Thr-183. Activated by RASSF1 which acts by preventing its dephosphorylation. Stress-activated, pro-apoptotic kinase which, following caspase-cleavage, enters the nucleus and induces chromatin condensation followed by internucleosomal DNA fragmentation. Key component of the Hippo signaling pathway which plays a pivotal role in organ size control and tumor suppression by restricting proliferation and promoting apoptosis. The core of this pathway is composed of a kinase cascade wherein STK3/MST2 and STK4/MST1, in complex with its regulatory protein SAV1, phosphorylates and activates LATS1/2 in complex with its regulatory protein MOB1, which in turn phosphorylates and inactivates YAP1 oncoprotein and WWTR1/TAZ. Phosphorylation of YAP1 by LATS2 inhibits its translocation into the nucleus to regulate cellular genes important for cell proliferation, cell death, and cell migration. STK3/MST2 and STK4/MST1 are required to repress proliferation of mature hepatocytes, to prevent activation of facultative adult liver stem cells (oval cells), and to inhibit tumor formation. Phosphorylates 'Ser-14' of histone H2B (H2BS14ph) during apoptosis. Phosphorylates FOXO3 upon oxidative stress, which results in its nuclear translocation and cell death initiation. Phosphorylates MOBKL1A, MOBKL1B and RASSF2. Phosphorylates TNNI3 (cardiac Tn-I) and alters its binding affinity to TNNC1 (cardiac Tn-C) and TNNT2 (cardiac Tn-T). Phosphorylates FOXO1 on 'Ser-212' and regulates its activation and stimulates transcription of PMAIP1 in a FOXO1-dependent manner. Phosphorylates SIRT1 and inhibits SIRT1-mediated p53/TP53 deacetylation, thereby promoting p53/TP53 dependent transcription and apoptosis upon DNA damage. Acts as an inhibitor of PKB/AKT1. Phosphorylates AR on 'Ser-650' and suppresses its activity by intersecting with PKB/AKT1 signaling and antagonizing formation of AR-chromatin complexes. In Chlorocebus aethiops (Green monkey), this protein is Serine/threonine-protein kinase 4 (STK4).